A 333-amino-acid polypeptide reads, in one-letter code: Complement C1q and tumor necrosis factor-related protein 9 (333 aa).

The N-terminal stretch at 1 to 19 is a signal peptide; it reads MRIWWLLLVMGACTRSVFS. A disordered region spans residues 22–194; that stretch reads TCRQGHSGIP…GDRGEKGKVG (173 aa). 3 Collagen-like domains span residues 24-82, 84-130, and 134-193; these read RQGH…DGRV, AKGI…KGEV, and GPEG…KGKV. Residues Pro31, Pro34, and Pro40 each carry the 4-hydroxyproline modification. Positions 42–57 are enriched in basic and acidic residues; the sequence is RDGRDGAKGDKGDAGE. 4-hydroxyproline is present on residues Pro58, Pro61, and Pro64. Basic and acidic residues predominate over residues 67 to 88; it reads DGIRGEKGEPGADGRVEAKGIK. Residue Lys73 is modified to 5-hydroxylysine. O-linked (Gal...) hydroxylysine glycosylation is present at Lys73. Residues Pro76 and Pro115 each carry the 4-hydroxyproline modification. At Lys127 the chain carries 5-hydroxylysine. An O-linked (Gal...) hydroxylysine glycan is attached at Lys127. A 4-hydroxyproline mark is found at Pro151, Pro160, and Pro175. Over residues 183-193 the composition is skewed to basic and acidic residues; it reads WKGDRGEKGKV. The region spanning 197–333 is the C1q domain; the sequence is PLVPKSAFTV…FTGFLLFSSS (137 aa).

As to quaternary structure, multimers (predominantly trimers). Interacts with ADIPOQ via the C1q domain to form a heterotrimeric complex. Post-translationally, the isomeric forms of the hydroxylated amino acids could not be determined in the mass-spectrometric methods reported in PubMed:18787108 but are assumed on the basis of their occurrence in collagen-like domains. Expressed predominantly in adipose tissue. Females express higher levels than males.

Its subcellular location is the secreted. Its function is as follows. Probable adipokine. Activates AMPK, AKT, and p44/42 MAPK signaling pathways. This chain is Complement C1q and tumor necrosis factor-related protein 9 (C1qtnf9), found in Mus musculus (Mouse).